Consider the following 156-residue polypeptide: SsrA-binding protein (156 aa).

The protein belongs to the SmpB family.

It is found in the cytoplasm. Required for rescue of stalled ribosomes mediated by trans-translation. Binds to transfer-messenger RNA (tmRNA), required for stable association of tmRNA with ribosomes. tmRNA and SmpB together mimic tRNA shape, replacing the anticodon stem-loop with SmpB. tmRNA is encoded by the ssrA gene; the 2 termini fold to resemble tRNA(Ala) and it encodes a 'tag peptide', a short internal open reading frame. During trans-translation Ala-aminoacylated tmRNA acts like a tRNA, entering the A-site of stalled ribosomes, displacing the stalled mRNA. The ribosome then switches to translate the ORF on the tmRNA; the nascent peptide is terminated with the 'tag peptide' encoded by the tmRNA and targeted for degradation. The ribosome is freed to recommence translation, which seems to be the essential function of trans-translation. This Shouchella clausii (strain KSM-K16) (Alkalihalobacillus clausii) protein is SsrA-binding protein.